We begin with the raw amino-acid sequence, 372 residues long: UDP-N-acetylglucosamine--N-acetylmuramyl-(pentapeptide) pyrophosphoryl-undecaprenol N-acetylglucosamine transferase (372 aa).

Residues 11-13 (TAG), Asn123, Arg160, Ser200, and Gln298 each bind UDP-N-acetyl-alpha-D-glucosamine.

It belongs to the glycosyltransferase 28 family. MurG subfamily.

It localises to the cell membrane. The enzyme catalyses di-trans,octa-cis-undecaprenyl diphospho-N-acetyl-alpha-D-muramoyl-L-alanyl-D-glutamyl-meso-2,6-diaminopimeloyl-D-alanyl-D-alanine + UDP-N-acetyl-alpha-D-glucosamine = di-trans,octa-cis-undecaprenyl diphospho-[N-acetyl-alpha-D-glucosaminyl-(1-&gt;4)]-N-acetyl-alpha-D-muramoyl-L-alanyl-D-glutamyl-meso-2,6-diaminopimeloyl-D-alanyl-D-alanine + UDP + H(+). It functions in the pathway cell wall biogenesis; peptidoglycan biosynthesis. In terms of biological role, cell wall formation. Catalyzes the transfer of a GlcNAc subunit on undecaprenyl-pyrophosphoryl-MurNAc-pentapeptide (lipid intermediate I) to form undecaprenyl-pyrophosphoryl-MurNAc-(pentapeptide)GlcNAc (lipid intermediate II). The protein is UDP-N-acetylglucosamine--N-acetylmuramyl-(pentapeptide) pyrophosphoryl-undecaprenol N-acetylglucosamine transferase of Cutibacterium acnes (strain DSM 16379 / KPA171202) (Propionibacterium acnes).